The chain runs to 509 residues: Cytochrome P450 monooxygenase AFT11-1 (509 aa).

Residue C432 participates in heme binding.

Belongs to the cytochrome P450 family. It depends on heme as a cofactor.

It functions in the pathway mycotoxin biosynthesis. Functionally, cytochrome P450 monooxygenase; part of the gene clusters that mediate the biosynthesis of the host-selective toxins (HSTs) AF-toxins responsible for Alternaria black spot of strawberry disease by the strawberry pathotype. AF-toxin I and III are valine derivatives of 2,3-dyhydroxy-isovaleric acid and 2-hydroxy-isovaleric acid respectively, while AF II is an isoleucine derivative of 2-hydroxy-valeric acid. These derivatives are bound to a 9,10-epoxy-8-hydroxy-9-methyl-decatrienoic acid (EDA) moiety. On cellular level, AF-toxins affect plasma membrane of susceptible cells and cause a sudden increase in loss of K(+) after a few minutes of toxin treatment. The aldo-keto reductase AFTS1 catalyzes the conversion of 2-keto-isovaleric acid (2-KIV) to 2-hydroxy-isovaleric acid (2-HIV) by reduction of its ketone to an alcohol. The acyl-CoA ligase AFT1, the hydrolase AFT2 and the enoyl-CoA hydratases AFT3 and AFT6, but also the polyketide synthase AFT9, the acyl-CoA dehydrogenase AFT10, the cytochrome P450 monooxygenase AFT11 and the oxidoreductase AFT12 are all involved in the biosynthesis of the AK-, AF- and ACT-toxin common EDA structural moiety. The exact function of each enzyme, and of additional enzymes identified within the AF-toxin clusters have still to be determined. In Alternaria alternata (Alternaria rot fungus), this protein is Cytochrome P450 monooxygenase AFT11-1.